The chain runs to 149 residues: 3-dehydroquinate dehydratase 2 (149 aa).

Catalysis depends on Y24, which acts as the Proton acceptor. N75, H81, and D88 together coordinate substrate. H101 (proton donor) is an active-site residue. Residues 102 to 103 (LS) and R112 contribute to the substrate site.

Belongs to the type-II 3-dehydroquinase family. Homododecamer.

The catalysed reaction is 3-dehydroquinate = 3-dehydroshikimate + H2O. The protein operates within metabolic intermediate biosynthesis; chorismate biosynthesis; chorismate from D-erythrose 4-phosphate and phosphoenolpyruvate: step 3/7. Catalyzes a trans-dehydration via an enolate intermediate. The sequence is that of 3-dehydroquinate dehydratase 2 (aroQ2) from Pseudomonas putida (strain ATCC 47054 / DSM 6125 / CFBP 8728 / NCIMB 11950 / KT2440).